The primary structure comprises 217 residues: RNA chaperone ProQ (217 aa).

A disordered region spans residues 105–166; that stretch reads EAKARVQAQR…PREEQHTPVS (62 aa). The span at 121 to 131 shows a compositional bias: basic residues; sequence KRERKPRPTTP. The span at 132-162 shows a compositional bias: basic and acidic residues; sequence RRKEGAERKPRAQKPVEKAPKTVKAPREEQH.

It belongs to the ProQ family.

The protein localises to the cytoplasm. RNA chaperone with significant RNA binding, RNA strand exchange and RNA duplexing activities. May regulate ProP activity through an RNA-based, post-transcriptional mechanism. In Escherichia coli O8 (strain IAI1), this protein is RNA chaperone ProQ.